Reading from the N-terminus, the 354-residue chain is Phosphate acyltransferase (354 aa).

Belongs to the PlsX family. Homodimer. Probably interacts with PlsY.

It localises to the cytoplasm. The enzyme catalyses a fatty acyl-[ACP] + phosphate = an acyl phosphate + holo-[ACP]. It participates in lipid metabolism; phospholipid metabolism. In terms of biological role, catalyzes the reversible formation of acyl-phosphate (acyl-PO(4)) from acyl-[acyl-carrier-protein] (acyl-ACP). This enzyme utilizes acyl-ACP as fatty acyl donor, but not acyl-CoA. The chain is Phosphate acyltransferase from Bordetella petrii (strain ATCC BAA-461 / DSM 12804 / CCUG 43448).